A 227-amino-acid chain; its full sequence is Probable septum site-determining protein MinC (227 aa).

The protein belongs to the MinC family. Interacts with MinD and FtsZ.

Cell division inhibitor that blocks the formation of polar Z ring septums. Rapidly oscillates between the poles of the cell to destabilize FtsZ filaments that have formed before they mature into polar Z rings. Prevents FtsZ polymerization. This is Probable septum site-determining protein MinC from Photorhabdus laumondii subsp. laumondii (strain DSM 15139 / CIP 105565 / TT01) (Photorhabdus luminescens subsp. laumondii).